The sequence spans 898 residues: Coatomer subunit gamma (898 aa).

HEAT repeat units follow at residues 62-99 (TEAT…ISQD), 170-207 (EIVK…HDRL), 280-317 (KEIN…TNPT), 319-352 (VIPC…GNES), 353-389 (NVER…KFPK), and 392-427 (KHLI…NIPE). Positions 592 to 631 (GKSPFSTGASKKGDSVTGTPKSNNASNNNNNNEESSGPES) are disordered. A compositionally biased stretch (low complexity) spans 613-626 (SNNASNNNNNNEES).

It belongs to the COPG family. As to quaternary structure, oligomeric complex that consists of at least the alpha, beta, beta', gamma, delta, epsilon and zeta subunits.

Its subcellular location is the cytoplasm. The protein localises to the golgi apparatus membrane. The protein resides in the cytoplasmic vesicle. It is found in the COPI-coated vesicle membrane. Its function is as follows. The coatomer is a cytosolic protein complex that binds to dilysine motifs and reversibly associates with Golgi non-clathrin-coated vesicles, which further mediate biosynthetic protein transport from the ER, via the Golgi up to the trans Golgi network. Coatomer complex is required for budding from Golgi membranes, and is essential for the retrograde Golgi-to-ER transport of dilysine-tagged proteins. The sequence is that of Coatomer subunit gamma (copG) from Dictyostelium discoideum (Social amoeba).